The following is a 919-amino-acid chain: Glutamate receptor ionotropic, kainate 3 (919 aa).

An N-terminal signal peptide occupies residues 1-31 (MTAPWRRLRSLVWEYWAGFLVCAFWIPDSRG). Over 32-563 (MPHVIRIGGI…VFSFLNPLSP (532 aa)) the chain is Extracellular. N-linked (GlcNAc...) asparagine glycans are attached at residues N70, N76, N278, N381, N415, N426, and N433. A disulfide bridge connects residues C99 and C350. L-glutamate-binding residues include P518, T520, and R525. N-linked (GlcNAc...) asparagine glycosylation is found at N548 and N551. Residues 564 to 584 (DIWMYVLLAYLGVSCVLFVIA) traverse the membrane as a helical segment. The Cytoplasmic portion of the chain corresponds to 585-636 (RFSPYEWYDAHPCNPGSEVVENNFTLLNSFWFGMGSLMQQGSELMPKALSTR). Residues 637–657 (IIGGIWWFFTLIIISSYTANL) traverse the membrane as a helical segment. At 658-820 (AAFLTVERME…KEASALGIQK (163 aa)) the chain is on the extracellular side. L-glutamate is bound by residues A691, T692, and E739. N752 carries N-linked (GlcNAc...) asparagine glycosylation. Residues 821–841 (IGGIFIVLAAGLVLSVLVAVG) form a helical membrane-spanning segment. The Cytoplasmic portion of the chain corresponds to 842-919 (EFIYKLRKTA…CSTSLAPVFP (78 aa)). S869 carries the phosphoserine modification. K887 is covalently cross-linked (Glycyl lysine isopeptide (Lys-Gly) (interchain with G-Cter in SUMO1)).

The protein belongs to the glutamate-gated ion channel (TC 1.A.10.1) family. GRIK3 subfamily. Homotetramer, and heterotetramer with GRIK4 or GRIK5. Can form functional heteromeric receptors with GRIK2. Interacts with PRKCABP. Interacts with NETO2. In terms of assembly, homomeric GluR7A forms functional kainate receptors which have very low sensitivity to glutamate. Can form functional heteromeric receptors with GRIK4 and GRIK5. As to quaternary structure, homomeric GluR7B forms functional kainate receptors. Mass spectrometry data suggest the protein is N-glycosylated at five distinct sites. In terms of tissue distribution, expressed in the olfactory bulb (at protein level). Expressed in the deep cortical layers, dentate gyrus, reticular thalamic nucleus, mammillary bodies, pons, and cerebellum of the adult.

It is found in the cell membrane. The protein localises to the postsynaptic cell membrane. It catalyses the reaction Ca(2+)(in) = Ca(2+)(out). Its function is as follows. Ionotropic glutamate receptor that functions as a cation-permeable ligand-gated ion channel, gated by L-glutamate and the glutamatergic agonist kainic acid. Binding of the excitatory neurotransmitter L-glutamate induces a conformation change, leading to the opening of the cation channel, and thereby converts the chemical signal to an electrical impulse. The receptor then desensitizes rapidly and enters a transient inactive state, characterized by the presence of bound agonist. In association with GRIK2, involved in presynaptic facilitation of glutamate release at hippocampal mossy fiber synapses. Functionally, ionotropic glutamate receptor that functions as a ligand-gated cation channel, gated by L-glutamate and the glutamatergic agonist kainic acid. In Rattus norvegicus (Rat), this protein is Glutamate receptor ionotropic, kainate 3 (Grik3).